Consider the following 236-residue polypeptide: 7-cyano-7-deazaguanine synthase (236 aa).

Residue 7-17 participates in ATP binding; that stretch reads CSGGLDSVSLA. The Zn(2+) site is built by cysteine 185, cysteine 193, cysteine 196, and cysteine 199.

It belongs to the QueC family. It depends on Zn(2+) as a cofactor.

The catalysed reaction is 7-carboxy-7-deazaguanine + NH4(+) + ATP = 7-cyano-7-deazaguanine + ADP + phosphate + H2O + H(+). The protein operates within purine metabolism; 7-cyano-7-deazaguanine biosynthesis. In terms of biological role, catalyzes the ATP-dependent conversion of 7-carboxy-7-deazaguanine (CDG) to 7-cyano-7-deazaguanine (preQ(0)). This chain is 7-cyano-7-deazaguanine synthase, found in Rhizobium etli (strain ATCC 51251 / DSM 11541 / JCM 21823 / NBRC 15573 / CFN 42).